The following is a 621-amino-acid chain: Chaperone protein HscA homolog (621 aa).

It belongs to the heat shock protein 70 family.

Functionally, chaperone involved in the maturation of iron-sulfur cluster-containing proteins. Has a low intrinsic ATPase activity which is markedly stimulated by HscB. In Acidithiobacillus ferrooxidans (strain ATCC 23270 / DSM 14882 / CIP 104768 / NCIMB 8455) (Ferrobacillus ferrooxidans (strain ATCC 23270)), this protein is Chaperone protein HscA homolog.